Consider the following 509-residue polypeptide: Zinc finger protein Aiolos (509 aa).

The segment covering 1–19 (MEDIQTNAELKSTQEQSVP) has biased composition (polar residues). The disordered stretch occupies residues 1–86 (MEDIQTNAEL…MGNAEEPEIP (86 aa)). A phosphoserine mark is found at Ser22 and Ser42. A compositionally biased stretch (basic and acidic residues) spans 56-72 (DSMKVKDEYSERDENVL). Residues Lys61, Lys73, and Lys100 each participate in a glycyl lysine isopeptide (Lys-Gly) (interchain with G-Cter in SUMO2) cross-link. 3 C2H2-type zinc fingers span residues 118–140 (MNCD…KRSH), 146–168 (FQCN…IKLH), and 174–196 (FKCH…LRTH). The C2H2-type 4; atypical zinc finger occupies 202-224 (YKCEFCGRSYKQRSSLEEHKERC). A Glycyl lysine isopeptide (Lys-Gly) (interchain with G-Cter in SUMO2) cross-link involves residue Lys245. Thr326 bears the Phosphothreonine mark. The interval 364–394 (IHLPEKSVPSERGLSPNNSGHDSTDTDSNHE) is disordered. The residue at position 378 (Ser378) is a Phosphoserine. Basic and acidic residues predominate over residues 385–394 (DSTDTDSNHE). The C2H2-type 5 zinc finger occupies 452 to 474 (YRCDHCRVLFLDYVMFTIHMGCH). The tract at residues 452-504 (YRCDHCRVLFLDYVMFTIHMGCHGFRDPFECNMCGYRSHDRYEFSSHIARGEH) is mediates homodimerization and heterodimerization. The C2H2-type 6; atypical zinc finger occupies 480-504 (FECNMCGYRSHDRYEFSSHIARGEH).

It belongs to the Ikaros C2H2-type zinc-finger protein family. In terms of assembly, homodimer. Heterodimer with other IKAROS family members. Interacts with IKZF4 and IKZF5. Interacts with IKZF1. Interacts with HRAS. Interacts with FOXP3; this interaction may be required for silencing target genes and regulating the suppressive activity of FOXP3-positive regulatory T-cells (Treg). Interacts with BCL21L isoform Bcl-X(L); this interaction blocks the anti-apoptotic role of BCL21L. Associates with histone deacetylase complexes containing HDAC1, MTA2 and SIN3A. In terms of processing, phosphorylation on tyrosine residues induced by IL2 is required for dissociation from HRAS and nuclear translocation of IKZF3 in T-cells. Phosphorylation on tyrosine residues induced by IL4 is required for dissociation from Bcl-X(L) in T-cells. Expressed most strongly in peripheral blood leukocytes, the spleen, and the thymus.

It is found in the nucleus. It localises to the cytoplasm. In terms of biological role, transcription factor that plays an important role in the regulation of lymphocyte differentiation. Plays an essential role in regulation of B-cell differentiation, proliferation and maturation to an effector state. Involved in regulating BCL2 expression and controlling apoptosis in T-cells in an IL2-dependent manner. This Homo sapiens (Human) protein is Zinc finger protein Aiolos (IKZF3).